Here is a 274-residue protein sequence, read N- to C-terminus: 2,3,4,5-tetrahydropyridine-2,6-dicarboxylate N-succinyltransferase (274 aa).

Belongs to the transferase hexapeptide repeat family.

It localises to the cytoplasm. The enzyme catalyses (S)-2,3,4,5-tetrahydrodipicolinate + succinyl-CoA + H2O = (S)-2-succinylamino-6-oxoheptanedioate + CoA. It participates in amino-acid biosynthesis; L-lysine biosynthesis via DAP pathway; LL-2,6-diaminopimelate from (S)-tetrahydrodipicolinate (succinylase route): step 1/3. The protein is 2,3,4,5-tetrahydropyridine-2,6-dicarboxylate N-succinyltransferase of Alteromonas mediterranea (strain DSM 17117 / CIP 110805 / LMG 28347 / Deep ecotype).